A 496-amino-acid chain; its full sequence is Cytochrome P450 71D180 (496 aa).

Residues 1-21 (MDISISWVVIIVFVLSYLILM) form a helical; Signal-anchor for type II membrane protein membrane-spanning segment. Cys-435 serves as a coordination point for heme.

Belongs to the cytochrome P450 family. Heme is required as a cofactor. In terms of tissue distribution, mostly expressed in flowers and, to a lower extent, in leaves, especially in glandular trichomes.

Its subcellular location is the membrane. The enzyme catalyses (4R)-limonene + reduced [NADPH--hemoprotein reductase] + O2 = (1R,5S)-carveol + oxidized [NADPH--hemoprotein reductase] + H2O + H(+). It catalyses the reaction (4S)-limonene + reduced [NADPH--hemoprotein reductase] + O2 = (1S,5R)-carveol + oxidized [NADPH--hemoprotein reductase] + H2O + H(+). The catalysed reaction is gamma-terpinene + 2 reduced [NADPH--hemoprotein reductase] + 2 O2 = carvacrol + 2 oxidized [NADPH--hemoprotein reductase] + 3 H2O + 2 H(+). The protein operates within secondary metabolite biosynthesis; terpenoid biosynthesis. Involved in the biosynthesis of phenolic monoterpenes natural products thymol and carvacrol which have a broad range of biological activities acting as antimicrobial compounds, insecticides, antioxidants and pharmaceutical agents. Catalyzes the C2-hydroxylation of gamma-terpinene to produce carvacrol. Mediates also the C6-hydroxylation of (4S)-limonene and (4R)-limonene to form carveol. This Thymus vulgaris (Thyme) protein is Cytochrome P450 71D180.